The primary structure comprises 877 residues: Probable Ras GTPase-activating-like protein ngap (877 aa).

Residues 72–218 (TPSATYESLI…KDQKERELWF (147 aa)) form the C2 domain. The disordered stretch occupies residues 350–456 (SDDGDISGLK…ETINLSSSIN (107 aa)). The segment covering 389-409 (TTATTTPSSTPSTPISPSSQS) has biased composition (low complexity). A compositionally biased stretch (polar residues) spans 410-425 (NNIKTPDSKTRSSSNA). Composition is skewed to low complexity over residues 426-438 (STNT…KSTG) and 447-456 (ETINLSSSIN). The Ras-GAP domain maps to 591-802 (GKCLYLLKSL…ENMKSFINTL (212 aa)). The stretch at 820–848 (LEKELACLYRHLIKQRQDMAEEMESTESE) forms a coiled coil.

In terms of biological role, may function as a Ras GTPase-activating protein. The protein is Probable Ras GTPase-activating-like protein ngap (ngap) of Dictyostelium discoideum (Social amoeba).